Here is a 284-residue protein sequence, read N- to C-terminus: Diaminopimelate epimerase (284 aa).

Positions 14 and 67 each coordinate substrate. Catalysis depends on Cys76, which acts as the Proton donor. Substrate is bound by residues 77 to 78 (GN), Asn166, Asn199, and 217 to 218 (ER). Cys226 serves as the catalytic Proton acceptor. 227-228 (GT) provides a ligand contact to substrate.

Belongs to the diaminopimelate epimerase family. In terms of assembly, homodimer.

Its subcellular location is the cytoplasm. It catalyses the reaction (2S,6S)-2,6-diaminopimelate = meso-2,6-diaminopimelate. It participates in amino-acid biosynthesis; L-lysine biosynthesis via DAP pathway; DL-2,6-diaminopimelate from LL-2,6-diaminopimelate: step 1/1. Its function is as follows. Catalyzes the stereoinversion of LL-2,6-diaminopimelate (L,L-DAP) to meso-diaminopimelate (meso-DAP), a precursor of L-lysine and an essential component of the bacterial peptidoglycan. The protein is Diaminopimelate epimerase of Bacillus velezensis (strain DSM 23117 / BGSC 10A6 / LMG 26770 / FZB42) (Bacillus amyloliquefaciens subsp. plantarum).